A 380-amino-acid chain; its full sequence is 1-deoxy-D-xylulose 5-phosphate reductoisomerase 2 (380 aa).

NADPH contacts are provided by S10, G11, S12, I13, G36, K37, N38, and N120. A 1-deoxy-D-xylulose 5-phosphate-binding site is contributed by K121. Residue E122 coordinates NADPH. A Mn(2+)-binding site is contributed by D146. 1-deoxy-D-xylulose 5-phosphate is bound by residues S147, E148, S172, and H195. E148 lines the Mn(2+) pocket. An NADPH-binding site is contributed by G201. S208, N213, K214, and E217 together coordinate 1-deoxy-D-xylulose 5-phosphate. E217 contributes to the Mn(2+) binding site.

It belongs to the DXR family. Mg(2+) is required as a cofactor. Requires Mn(2+) as cofactor.

The enzyme catalyses 2-C-methyl-D-erythritol 4-phosphate + NADP(+) = 1-deoxy-D-xylulose 5-phosphate + NADPH + H(+). Its pathway is isoprenoid biosynthesis; isopentenyl diphosphate biosynthesis via DXP pathway; isopentenyl diphosphate from 1-deoxy-D-xylulose 5-phosphate: step 1/6. In terms of biological role, catalyzes the NADPH-dependent rearrangement and reduction of 1-deoxy-D-xylulose-5-phosphate (DXP) to 2-C-methyl-D-erythritol 4-phosphate (MEP). The chain is 1-deoxy-D-xylulose 5-phosphate reductoisomerase 2 from Bacillus thuringiensis subsp. konkukian (strain 97-27).